A 647-amino-acid polypeptide reads, in one-letter code: MRLFFTPSMSNLSIFFSILLLSLPLPSIGDLAADKSALLSFRSAVGGRTLLWDVKQTSPCNWTGVLCDGGRVTALRLPGETLSGHIPEGIFGNLTQLRTLSLRLNGLTGSLPLDLGSCSDLRRLYLQGNRFSGEIPEVLFSLSNLVRLNLAENEFSGEISSGFKNLTRLKTLYLENNKLSGSLLDLDLSLDQFNVSNNLLNGSIPKSLQKFDSDSFVGTSLCGKPLVVCSNEGTVPSQPISVGNIPGTVEGSEEKKKRKKLSGGAIAGIVIGCVVGLSLIVMILMVLFRKKGNERTRAIDLATIKHHEVEIPGEKAAVEAPENRSYVNEYSPSAVKAVEVNSSGMKKLVFFGNATKVFDLEDLLRASAEVLGKGTFGTAYKAVLDAVTLVAVKRLKDVTMADREFKEKIEVVGAMDHENLVPLRAYYYSGDEKLLVYDFMPMGSLSALLHGNKGAGRPPLNWEVRSGIALGAARGLDYLHSQDPLSSHGNVKSSNILLTNSHDARVSDFGLAQLVSASSTTPNRATGYRAPEVTDPRRVSQKADVYSFGVVLLELLTGKAPSNSVMNEEGMDLARWVHSVAREEWRNEVFDSELMSIETVVSVEEEMAEMLQLGIDCTEQHPDKRPVMVEVVRRIQELRQSGADRVG.

The signal sequence occupies residues 1–29; that stretch reads MRLFFTPSMSNLSIFFSILLLSLPLPSIG. LRR repeat units lie at residues 69–93, 94–118, 119–142, 144–165, and 166–192; these read GGRV…IFGN, LTQL…LGSC, SDLR…LFSL, NLVR…GFKN, and LTRL…SLDQ. A helical transmembrane segment spans residues 268–288; it reads GIVIGCVVGLSLIVMILMVLF. The Protein kinase domain occupies 365–639; it reads RASAEVLGKG…EVVRRIQELR (275 aa). At serine 367 the chain carries Phosphoserine. Position 371-379 (371-379) interacts with ATP; that stretch reads LGKGTFGTA. A Phosphothreonine modification is found at threonine 388. Position 393 (lysine 393) interacts with ATP. A Phosphoserine modification is found at serine 444. Threonine 520 carries the phosphothreonine modification. Serine 540 is modified (phosphoserine). Position 618 is a phosphothreonine (threonine 618).

Belongs to the protein kinase superfamily. Ser/Thr protein kinase family. Interacts with At3g17950, At3g27210 and At5g05190. Autophosphorylation. Expressed in root tips, lateral root primordia, stipules, and floral organ abscission zones.

It is found in the cell membrane. The sequence is that of Probable inactive receptor kinase RLK902 (RLK902) from Arabidopsis thaliana (Mouse-ear cress).